A 292-amino-acid chain; its full sequence is Homoserine kinase (292 aa).

Proline 80–serine 90 is a binding site for ATP.

The protein belongs to the GHMP kinase family. Homoserine kinase subfamily.

The protein resides in the cytoplasm. The catalysed reaction is L-homoserine + ATP = O-phospho-L-homoserine + ADP + H(+). It participates in amino-acid biosynthesis; L-threonine biosynthesis; L-threonine from L-aspartate: step 4/5. Functionally, catalyzes the ATP-dependent phosphorylation of L-homoserine to L-homoserine phosphate. This chain is Homoserine kinase, found in Leuconostoc mesenteroides subsp. mesenteroides (strain ATCC 8293 / DSM 20343 / BCRC 11652 / CCM 1803 / JCM 6124 / NCDO 523 / NBRC 100496 / NCIMB 8023 / NCTC 12954 / NRRL B-1118 / 37Y).